A 274-amino-acid polypeptide reads, in one-letter code: Eukaryotic translation initiation factor 3 subunit G (274 aa).

Residues Ser146, Ser164, and Ser171 each carry the phosphoserine modification. The disordered stretch occupies residues 149 to 170; that stretch reads ANTSAAATPEPDTDASGKYVPP. The RRM domain maps to 191-270; the sequence is TTLKISQLNT…LILHLEWPKK (80 aa).

The protein belongs to the eIF-3 subunit G family. As to quaternary structure, component of the eukaryotic translation initiation factor 3 (eIF-3) complex.

It localises to the cytoplasm. In terms of biological role, RNA-binding component of the eukaryotic translation initiation factor 3 (eIF-3) complex, which is involved in protein synthesis of a specialized repertoire of mRNAs and, together with other initiation factors, stimulates binding of mRNA and methionyl-tRNAi to the 40S ribosome. The eIF-3 complex specifically targets and initiates translation of a subset of mRNAs involved in cell proliferation. This subunit can bind 18S rRNA. The polypeptide is Eukaryotic translation initiation factor 3 subunit G (Meyerozyma guilliermondii (strain ATCC 6260 / CBS 566 / DSM 6381 / JCM 1539 / NBRC 10279 / NRRL Y-324) (Yeast)).